We begin with the raw amino-acid sequence, 638 residues long: Threonine--tRNA ligase (638 aa).

A TGS domain is found at 1-61; that stretch reads MVAITLPDGK…DRDVNLSIIT (61 aa). The segment at 244–536 is catalytic; that stretch reads DHRRLGREME…LIENFAGRFP (293 aa). Residues cysteine 336, histidine 387, and histidine 513 each coordinate Zn(2+).

It belongs to the class-II aminoacyl-tRNA synthetase family. Homodimer. Zn(2+) serves as cofactor.

The protein localises to the cytoplasm. The catalysed reaction is tRNA(Thr) + L-threonine + ATP = L-threonyl-tRNA(Thr) + AMP + diphosphate + H(+). In terms of biological role, catalyzes the attachment of threonine to tRNA(Thr) in a two-step reaction: L-threonine is first activated by ATP to form Thr-AMP and then transferred to the acceptor end of tRNA(Thr). Also edits incorrectly charged L-seryl-tRNA(Thr). The sequence is that of Threonine--tRNA ligase from Paramagnetospirillum magneticum (strain ATCC 700264 / AMB-1) (Magnetospirillum magneticum).